The sequence spans 554 residues: U4/U6 small nuclear ribonucleoprotein PRP4-like protein (554 aa).

Over residues 48–65 the composition is skewed to pro residues; that stretch reads APIPMMPHPPVARPPTFR. Residues 48–99 form a disordered region; the sequence is APIPMMPHPPVARPPTFRPPVSQNGGVKTSDSDSESDDEHIEISEESKQVRE. Residues 88-99 show a composition bias toward basic and acidic residues; the sequence is IEISEESKQVRE. WD repeat units lie at residues 253–292, 296–335, 337–376, 379–418, 421–460, 463–503, and 506–545; these read GDDR…NTIA, DHKE…LQTF, GHLD…ELLL, GHSR…SILV, GHIK…SLYI, AHAN…LVKS, and GHES…DEDE.

It localises to the nucleus speckle. In terms of biological role, participates in pre-mRNA splicing. Part of the U4/U5/U6 tri-snRNP complex, one of the building blocks of the spliceosome. Essential for reproduction. In female gametophyte, is necessary for the egg cell and central cell fate determination and hence reproductive success. Involved in a mechanism that prevents accessory cells from adopting gametic cell fate. Modulates egg cell signaling center that regulates the development of all female gametophytic cells. The sequence is that of U4/U6 small nuclear ribonucleoprotein PRP4-like protein from Arabidopsis thaliana (Mouse-ear cress).